We begin with the raw amino-acid sequence, 203 residues long: Pyrrolidone-carboxylate peptidase 1 (203 aa).

Catalysis depends on residues Glu-78, Cys-141, and His-165.

The protein belongs to the peptidase C15 family. Homotetramer.

The protein localises to the cytoplasm. The catalysed reaction is Release of an N-terminal pyroglutamyl group from a polypeptide, the second amino acid generally not being Pro.. Functionally, removes 5-oxoproline from various penultimate amino acid residues except L-proline. This Caldanaerobacter subterraneus subsp. tengcongensis (strain DSM 15242 / JCM 11007 / NBRC 100824 / MB4) (Thermoanaerobacter tengcongensis) protein is Pyrrolidone-carboxylate peptidase 1.